The sequence spans 179 residues: Large ribosomal subunit protein uL6 (179 aa).

Belongs to the universal ribosomal protein uL6 family. Part of the 50S ribosomal subunit.

Functionally, this protein binds to the 23S rRNA, and is important in its secondary structure. It is located near the subunit interface in the base of the L7/L12 stalk, and near the tRNA binding site of the peptidyltransferase center. In Chlorobium chlorochromatii (strain CaD3), this protein is Large ribosomal subunit protein uL6.